The following is a 494-amino-acid chain: UPF0371 protein spr0309 (494 aa).

The protein belongs to the UPF0371 family.

The polypeptide is UPF0371 protein spr0309 (Streptococcus pneumoniae (strain ATCC BAA-255 / R6)).